We begin with the raw amino-acid sequence, 962 residues long: Phosphatidylinositol 3,4,5-trisphosphate 3-phosphatase and dual-specificity protein phosphatase daf-18 (962 aa).

The disordered stretch occupies residues 1 to 37; sequence MVTPPPDVPSTSTRSMARDLQENPNRQPGEPRVSEPY. The Phosphatase tensin-type domain maps to 58-230; that stretch reads CRTEYQNIDL…YYYHKLRERE (173 aa). The active-site Phosphocysteine intermediate is the Cys169. In terms of domain architecture, C2 tensin-type spans 234-530; that stretch reads LPLRMQLIGV…GMKLHVVLRC (297 aa). Disordered stretches follow at residues 382–416 and 689–731; these read DTSIGRKNGMRRNETPMRKIDPETGNEFESPWQIV and IENT…RLPD. A compositionally biased stretch (basic and acidic residues) spans 392–403; that stretch reads RRNETPMRKIDP. Residues 692 to 704 show a composition bias toward low complexity; sequence TGPSTSGSSAPGT. Positions 706-720 are enriched in basic and acidic residues; the sequence is KKTEASQSDKVKPAT.

It belongs to the PTEN phosphatase protein family. In terms of assembly, interacts (via C-terminus) with vab-1 (via kinase domain); the interaction is independent of vab-1 kinase activity. Interacts with arr-1 and mpz-1; the interaction may inhibit daf-18. Interacts (via C-terminus) with daf-2 (via kinase domain). Post-translationally, phosphorylated by vab-1 on tyrosine residues which may promote daf-18 degradation. Expressed in embryo, larvae and in adult germline (at protein level). Expressed at equal levels in the 6 vulva precursor cells (VPCs) of L2 larvae and in the descendant cells of the induced VPCs (at protein level). Expressed in the uterus (at protein level). Expressed in the Z2/Z3 germline precursors, oocytes, several amphid neurons and weakly in the nerve cord (at protein level).

The protein localises to the perikaryon. It is found in the cell membrane. It localises to the cell projection. The protein resides in the axon. Its subcellular location is the dendrite. The protein localises to the cytoplasm. It is found in the nucleus. It catalyses the reaction a 1,2-diacyl-sn-glycero-3-phospho-(1D-myo-inositol-3,4,5-trisphosphate) + H2O = a 1,2-diacyl-sn-glycero-3-phospho-(1D-myo-inositol-4,5-bisphosphate) + phosphate. The enzyme catalyses O-phospho-L-seryl-[protein] + H2O = L-seryl-[protein] + phosphate. It carries out the reaction O-phospho-L-threonyl-[protein] + H2O = L-threonyl-[protein] + phosphate. The catalysed reaction is O-phospho-L-tyrosyl-[protein] + H2O = L-tyrosyl-[protein] + phosphate. It catalyses the reaction 1,2-dioctanoyl-sn-glycero-3-phospho-(1D-myo-inositol-3,4,5-trisphosphate) + H2O = 1,2-dioctanoyl-sn-glycero-3-phospho-(1D-myo-inositol-4,5-bisphosphate) + phosphate. The enzyme catalyses 1,2-dihexadecanoyl-sn-glycero-3-phospho-(1D-myo-inositol-3,4,5-trisphosphate) + H2O = 1,2-dihexadecanoyl-sn-glycero-3-phospho-(1D-myo-inositol-4,5-bisphosphate) + phosphate. In terms of biological role, acts as a dual-specificity protein phosphatase, dephosphorylating tyrosine-, serine- and threonine-phosphorylated proteins. Also acts as a lipid phosphatase, removing the phosphate in the D3 position of the inositol ring from phosphatidylinositol 3,4,5-trisphosphate. By dephosphorylating PtdIns(3,4,5)P3 antagonizes PtdIns(3,4,5)P3 production by age-1/PI3K and thus, negatively regulates daf-2-mediated processes including dauer formation, longevity, fat metabolism, chemotaxis towards salt, thermotolerance and axon guidance. Similarly, promotes apoptosis during embryonic development by suppressing the recruitment of the prosurvival kinases akt-1/2 to the plasma membrane. In addition, regulates Z2/Z3 germline precursor cell cycle by maintaining them arrested at the G2 stage and by controlling their growth during L1 diapause. After sperm depletion in larvae and adult hermaphrodites, promotes germline stem cell quiescence and oocyte accumulation. By dephosphorylating ephrin-like receptor vab-1 on tyrosine residues, negatively regulates oocyte maturation downstream of vab-1 and upstream of mpk-1, independently of daf-2. Plays a role in postembryonic muscle arm extensions. Required for neurite outgrowth during AIY interneuron embryonic development. Mainly independently of daf-2, negatively regulates vulva induction probably by inhibiting mpk-1 phosphorylation. Both lipid and protein phosphatase activities are required for the regulation of vulva induction. Plays a role in gonad and germline development following the L1 diapause. This Caenorhabditis elegans protein is Phosphatidylinositol 3,4,5-trisphosphate 3-phosphatase and dual-specificity protein phosphatase daf-18.